Consider the following 174-residue polypeptide: MTLRERAELKLGISGMPGVGKTTLVTKVLEVAKSKFAICGFITVEVRDGGKRIGFDIIDVNSGERKPFAREGIGMPSVGKYVINLGTCTLISKALRHKPCNLAIVDEIGAMEFKCPNFTTDLEEVVSNTPRILATIHRNYIGIAKRLGFEVIWLTRENWEMTYKQVLKRLGLSI.

ATP is bound by residues G15 to T22 and L102 to G109.

This sequence belongs to the THEP1 NTPase family.

The enzyme catalyses a ribonucleoside 5'-triphosphate + H2O = a ribonucleoside 5'-diphosphate + phosphate + H(+). In terms of biological role, has nucleotide phosphatase activity towards ATP, GTP, CTP, TTP and UTP. May hydrolyze nucleoside diphosphates with lower efficiency. The protein is Nucleoside-triphosphatase THEP1 of Pyrobaculum islandicum (strain DSM 4184 / JCM 9189 / GEO3).